A 344-amino-acid polypeptide reads, in one-letter code: tRNA N6-adenosine threonylcarbamoyltransferase (344 aa).

H111 and H115 together coordinate Fe cation. Residues 134–138 (LVSGG), D167, G180, and N277 each bind substrate. D305 lines the Fe cation pocket.

This sequence belongs to the KAE1 / TsaD family. Fe(2+) serves as cofactor.

The protein localises to the cytoplasm. It carries out the reaction L-threonylcarbamoyladenylate + adenosine(37) in tRNA = N(6)-L-threonylcarbamoyladenosine(37) in tRNA + AMP + H(+). Required for the formation of a threonylcarbamoyl group on adenosine at position 37 (t(6)A37) in tRNAs that read codons beginning with adenine. Is involved in the transfer of the threonylcarbamoyl moiety of threonylcarbamoyl-AMP (TC-AMP) to the N6 group of A37, together with TsaE and TsaB. TsaD likely plays a direct catalytic role in this reaction. This is tRNA N6-adenosine threonylcarbamoyltransferase from Glaesserella parasuis serovar 5 (strain SH0165) (Haemophilus parasuis).